Here is a 333-residue protein sequence, read N- to C-terminus: Adenosine deaminase (333 aa).

2 residues coordinate Zn(2+): His12 and His14. His14, Asp16, and Gly170 together coordinate substrate. Residue His197 coordinates Zn(2+). Catalysis depends on Glu200, which acts as the Proton donor. Zn(2+) is bound at residue Asp278. Asp279 serves as a coordination point for substrate.

The protein belongs to the metallo-dependent hydrolases superfamily. Adenosine and AMP deaminases family. Adenosine deaminase subfamily. Requires Zn(2+) as cofactor.

The catalysed reaction is adenosine + H2O + H(+) = inosine + NH4(+). It carries out the reaction 2'-deoxyadenosine + H2O + H(+) = 2'-deoxyinosine + NH4(+). Catalyzes the hydrolytic deamination of adenosine and 2-deoxyadenosine. This chain is Adenosine deaminase, found in Shigella dysenteriae serotype 1 (strain Sd197).